The following is a 469-amino-acid chain: Uronate isomerase (469 aa).

This sequence belongs to the metallo-dependent hydrolases superfamily. Uronate isomerase family.

It carries out the reaction D-glucuronate = D-fructuronate. The catalysed reaction is aldehydo-D-galacturonate = keto-D-tagaturonate. It functions in the pathway carbohydrate metabolism; pentose and glucuronate interconversion. The chain is Uronate isomerase from Yersinia pseudotuberculosis serotype O:1b (strain IP 31758).